The following is a 168-amino-acid chain: MAPKKAKRRAAEGSSNVFSMFDQTQIQEFKEAFTVIDQNRDGIIDKDDLRETFAAMGRLNVKNEELDAMIKEASGPINFTVFLTMFGEKLKGADPEDVIMGAFKVLDPDGKGSIKKSFLEELLTTQCDRFTPEEIKNMWAAFPPDVAGNVDYKNICYVITHGEDKEGE.

Residue A2 is modified to N,N,N-trimethylalanine. S15 is subject to Phosphoserine. 3 EF-hand domains span residues 24–59, 94–129, and 130–165; these read TQIQ…MGRL, DPED…QCDR, and FTPE…GEDK. Ca(2+) is bound by residues D37, N39, D41, and D48.

Myosin is a hexamer of 2 heavy chains and 4 light chains. The N-terminus is blocked. N,N,N-trimethylalanine, found in other myosin light chains would not have been detected in the N-terminal tryptic peptide in PubMed:7358336 because it would remain trimethylated and ninhydrin negative after hydrolysis.

Its function is as follows. Myosin regulatory subunit that plays an essential to maintain muscle integrity during early development. Plays a role in muscle contraction. The chain is Myosin regulatory light chain 11 (MYL11) from Gallus gallus (Chicken).